We begin with the raw amino-acid sequence, 174 residues long: Sarcoplasmic calcium-binding protein (174 aa).

The residue at position 1 (Ser1) is an N-acetylserine. EF-hand domains are found at residues 3–38, 55–90, 91–126, and 125–160; these read LWVQ…FAKE, GVWD…NAKA, VVEG…LGLN, and LNPD…FFIN. Residues Asp16, Asp18, Asp20, and Asp27 each coordinate Ca(2+). Ca(2+) is bound by residues Asp104, Asn106, Asp108, Met110, Glu115, Asp138, Asn140, Asp142, and Glu149.

In terms of biological role, like parvalbumins, SCPs seem to be more abundant in fast contracting muscles, but no functional relationship can be established from this distribution. The protein is Sarcoplasmic calcium-binding protein of Perinereis vancaurica tetradentata (Sandworm).